Here is a 550-residue protein sequence, read N- to C-terminus: Pectinesterase 2.2 (550 aa).

N-linked (GlcNAc...) asparagine glycosylation is present at Asn179. The substrate site is built by Thr312 and Gln342. Cys331 and Cys358 are oxidised to a cystine. Catalysis depends on Asp365, which acts as the Proton donor. The Nucleophile role is filled by Asp386. Cys399 and Cys433 form a disulfide bridge. Substrate is bound by residues Arg454 and Trp456.

In the N-terminal section; belongs to the PMEI family. This sequence in the C-terminal section; belongs to the pectinesterase family.

The protein localises to the secreted. It localises to the cell wall. It carries out the reaction [(1-&gt;4)-alpha-D-galacturonosyl methyl ester](n) + n H2O = [(1-&gt;4)-alpha-D-galacturonosyl](n) + n methanol + n H(+). It participates in glycan metabolism; pectin degradation; 2-dehydro-3-deoxy-D-gluconate from pectin: step 1/5. Pectinesterase may play a role in cell wall metabolism during fruit growth and development prior to ripening and may be required for preparing cell walls for softening by polygalacturonase during fruit ripening. This Solanum lycopersicum (Tomato) protein is Pectinesterase 2.2 (PME2.2).